A 1003-amino-acid chain; its full sequence is Helicase-like transcription factor (1003 aa).

The residue at position 27 (Arg27) is an Omega-N-methylarginine. Positions 38 to 287 (EFQDIIPPDD…FSVKERPENV (250 aa)) are DNA-binding. Residue Lys112 forms a Glycyl lysine isopeptide (Lys-Gly) (interchain with G-Cter in SUMO2) linkage. Position 195 is a phosphotyrosine; by JAK2 (Tyr195). Lys211 is covalently cross-linked (Glycyl lysine isopeptide (Lys-Gly) (interchain with G-Cter in SUMO2)). Residue 294–301 (DDMGLGKT) coordinates ATP. Positions 317-373 (PLLSKRGKKNHPGKEYKDETIKRRGSNMDKKEDGHSESSTCGEEPSISGTPEKSSCT) are disordered. The segment covering 328–352 (PGKEYKDETIKRRGSNMDKKEDGHS) has biased composition (basic and acidic residues). A compositionally biased stretch (polar residues) spans 353 to 373 (ESSTCGEEPSISGTPEKSSCT). Phosphoserine occurs at positions 394, 395, and 397. The 168-residue stretch at 433-600 (DSKFALTFFA…WSLLSFLKLK (168 aa)) folds into the Helicase ATP-binding domain. A DEGH box motif is present at residues 551–554 (DEGH). A Phosphothreonine modification is found at Thr730. An RING-type zinc finger spans residues 754–795 (CAICLDSLTFPVITHCAHVFCKPCICQVIHSEQPHAKCPLCR). The region spanning 831 to 990 (ALMHALIELR…TKKTDANDMK (160 aa)) is the Helicase C-terminal domain. Residues 919–1003 (SRVFLMDPAW…INEIRTLIDL (85 aa)) are interaction with SP1 and SP3.

Belongs to the SNF2/RAD54 helicase family. RAD16 subfamily. In terms of assembly, interacts with SP1 and SP3 independently of DNA; the interaction with these transcriptional factors may be required for basal transcription of target genes. Interacts with EGR1; the interaction requires prior binding to DNA and represses c-Rel via a DNA looping mechanism. Interacts with GATA4. Interacts with PCNA; the interaction promotes polyubiquitination of PCNA through association with the UBE2B-RAD18 and UBE2V2-UBE2N ubiquitin ligase complexes. Interacts with RAD18, SHPRH, UBE2V2 and UBE2N. As to expression, expressed in brain, heart, kidney, liver, lung, pancreas, placenta and skeletal muscle.

Its subcellular location is the cytoplasm. The protein resides in the nucleus. It localises to the nucleolus. The protein localises to the nucleoplasm. It catalyses the reaction S-ubiquitinyl-[E2 ubiquitin-conjugating enzyme]-L-cysteine + [acceptor protein]-L-lysine = [E2 ubiquitin-conjugating enzyme]-L-cysteine + N(6)-ubiquitinyl-[acceptor protein]-L-lysine.. It functions in the pathway protein modification; protein ubiquitination. In terms of biological role, has both helicase and E3 ubiquitin ligase activities. Possesses intrinsic ATP-dependent nucleosome-remodeling activity. This activity may be required for transcriptional activation or repression of specific target promoters. These may include the SERPINE1, to which this protein can bind directly. Plays a role in error-free postreplication repair (PRR) of damaged DNA and maintains genomic stability through acting as a ubiquitin ligase for 'Lys-63'-linked polyubiquitination of chromatin-bound PCNA. The polypeptide is Helicase-like transcription factor (Hltf) (Mus musculus (Mouse)).